Reading from the N-terminus, the 61-residue chain is Metallothionein-1F (61 aa).

An N-acetylmethionine modification is found at Met-1. A beta region spans residues 1 to 29 (MDPNCSCPTGGSCTCAGSCTCKACRCTSC). Cys-5, Cys-7, Cys-13, Cys-15, Cys-19, Cys-21, Cys-24, Cys-26, Cys-29, Cys-33, Cys-34, Cys-36, Cys-37, Cys-41, Cys-44, Cys-48, Cys-50, and Cys-57 together coordinate a divalent metal cation. The interval 30–61 (KKSCCSCCPAGCAKCAQGCICKGASDKCSCCA) is alpha. Ser-58 is subject to Phosphoserine. A divalent metal cation is bound by residues Cys-59 and Cys-60.

This sequence belongs to the metallothionein superfamily. Type 1 family. In terms of assembly, monomer.

In terms of biological role, metallothioneins have a high content of cysteine residues that bind various heavy metals; these proteins are transcriptionally regulated by both heavy metals and glucocorticoids. This Sus scrofa (Pig) protein is Metallothionein-1F (MT1F).